The primary structure comprises 47 residues: Large ribosomal subunit protein uL14c (47 aa).

Belongs to the universal ribosomal protein uL14 family. As to quaternary structure, part of the 50S ribosomal subunit.

The protein localises to the plastid. It is found in the chloroplast. Functionally, binds to 23S rRNA. The chain is Large ribosomal subunit protein uL14c (rpl14) from Vigna unguiculata (Cowpea).